Consider the following 284-residue polypeptide: Bifunctional protein FolD (284 aa).

Residues 166 to 168 and isoleucine 232 contribute to the NADP(+) site; that span reads GAS.

The protein belongs to the tetrahydrofolate dehydrogenase/cyclohydrolase family. As to quaternary structure, homodimer.

It carries out the reaction (6R)-5,10-methylene-5,6,7,8-tetrahydrofolate + NADP(+) = (6R)-5,10-methenyltetrahydrofolate + NADPH. It catalyses the reaction (6R)-5,10-methenyltetrahydrofolate + H2O = (6R)-10-formyltetrahydrofolate + H(+). It functions in the pathway one-carbon metabolism; tetrahydrofolate interconversion. Functionally, catalyzes the oxidation of 5,10-methylenetetrahydrofolate to 5,10-methenyltetrahydrofolate and then the hydrolysis of 5,10-methenyltetrahydrofolate to 10-formyltetrahydrofolate. The protein is Bifunctional protein FolD of Shewanella sp. (strain MR-7).